We begin with the raw amino-acid sequence, 245 residues long: Pyridoxine 5'-phosphate synthase (245 aa).

2 residues coordinate 3-amino-2-oxopropyl phosphate: N8 and R19. The active-site Proton acceptor is H44. Residues R46 and H51 each coordinate 1-deoxy-D-xylulose 5-phosphate. E76 serves as the catalytic Proton acceptor. Residue T106 participates in 1-deoxy-D-xylulose 5-phosphate binding. The active-site Proton donor is H198. 3-amino-2-oxopropyl phosphate is bound by residues D199 and G221–H222.

The protein belongs to the PNP synthase family. Homooctamer; tetramer of dimers.

It localises to the cytoplasm. The enzyme catalyses 3-amino-2-oxopropyl phosphate + 1-deoxy-D-xylulose 5-phosphate = pyridoxine 5'-phosphate + phosphate + 2 H2O + H(+). The protein operates within cofactor biosynthesis; pyridoxine 5'-phosphate biosynthesis; pyridoxine 5'-phosphate from D-erythrose 4-phosphate: step 5/5. In terms of biological role, catalyzes the complicated ring closure reaction between the two acyclic compounds 1-deoxy-D-xylulose-5-phosphate (DXP) and 3-amino-2-oxopropyl phosphate (1-amino-acetone-3-phosphate or AAP) to form pyridoxine 5'-phosphate (PNP) and inorganic phosphate. This chain is Pyridoxine 5'-phosphate synthase, found in Brucella anthropi (strain ATCC 49188 / DSM 6882 / CCUG 24695 / JCM 21032 / LMG 3331 / NBRC 15819 / NCTC 12168 / Alc 37) (Ochrobactrum anthropi).